An 85-amino-acid chain; its full sequence is U4-theraphotoxin-Hhn1f (85 aa).

The first 22 residues, 1–22 (MKVTLIAILTCAAVLVLHTTAA), serve as a signal peptide directing secretion. Positions 23–48 (EELEAESQLMEVGMPDTELAAVDEER) are excised as a propeptide. Residues C71 and C82 are joined by a disulfide bond.

Belongs to the neurotoxin 12 (Hwtx-2) family. 02 (Hwtx-2) subfamily. Expressed by the venom gland.

It is found in the secreted. Functionally, postsynaptic neurotoxin. The protein is U4-theraphotoxin-Hhn1f of Cyriopagopus hainanus (Chinese bird spider).